Here is a 453-residue protein sequence, read N- to C-terminus: Allantoinase (453 aa).

Residues His59, His61, Lys146, His186, His242, and Asp315 each coordinate Zn(2+). Lys146 carries the N6-carboxylysine modification.

It belongs to the metallo-dependent hydrolases superfamily. Allantoinase family. Homotetramer. It depends on Zn(2+) as a cofactor. Carboxylation allows a single lysine to coordinate two zinc ions.

The catalysed reaction is (S)-allantoin + H2O = allantoate + H(+). It participates in nitrogen metabolism; (S)-allantoin degradation; allantoate from (S)-allantoin: step 1/1. Its function is as follows. Catalyzes the conversion of allantoin (5-ureidohydantoin) to allantoic acid by hydrolytic cleavage of the five-member hydantoin ring. In Escherichia coli (strain K12 / MC4100 / BW2952), this protein is Allantoinase.